Here is a 189-residue protein sequence, read N- to C-terminus: Pyridoxal 5'-phosphate synthase subunit PdxT (189 aa).

47–49 (GES) contacts L-glutamine. The active-site Nucleophile is the C79. L-glutamine contacts are provided by residues R106 and 135–136 (IR). Catalysis depends on charge relay system residues H171 and E173.

Belongs to the glutaminase PdxT/SNO family. As to quaternary structure, in the presence of PdxS, forms a dodecamer of heterodimers. Only shows activity in the heterodimer.

The enzyme catalyses aldehydo-D-ribose 5-phosphate + D-glyceraldehyde 3-phosphate + L-glutamine = pyridoxal 5'-phosphate + L-glutamate + phosphate + 3 H2O + H(+). It carries out the reaction L-glutamine + H2O = L-glutamate + NH4(+). It functions in the pathway cofactor biosynthesis; pyridoxal 5'-phosphate biosynthesis. Catalyzes the hydrolysis of glutamine to glutamate and ammonia as part of the biosynthesis of pyridoxal 5'-phosphate. The resulting ammonia molecule is channeled to the active site of PdxS. This chain is Pyridoxal 5'-phosphate synthase subunit PdxT, found in Desulforudis audaxviator (strain MP104C).